The sequence spans 440 residues: Chromosome partition protein MukF (440 aa).

The leucine-zipper stretch occupies residues 208-236 (LDETSGNLRELQDTLNAAGDKLQSQLLRI).

This sequence belongs to the MukF family. In terms of assembly, interacts, and probably forms a ternary complex, with MukE and MukB via its C-terminal region. The complex formation is stimulated by calcium or magnesium. It is required for an interaction between MukE and MukB.

The protein localises to the cytoplasm. It is found in the nucleoid. Involved in chromosome condensation, segregation and cell cycle progression. May participate in facilitating chromosome segregation by condensation DNA from both sides of a centrally located replisome during cell division. Not required for mini-F plasmid partitioning. Probably acts via its interaction with MukB and MukE. Overexpression results in anucleate cells. It has a calcium binding activity. This Histophilus somni (strain 129Pt) (Haemophilus somnus) protein is Chromosome partition protein MukF.